The primary structure comprises 626 residues: Protein PCF11 (626 aa).

Residues 1-130 (MDHDTEVIVK…PLFEGSALEK (130 aa)) form an interaction with RBP1 CTD (CID) region. Residues 4 to 139 (DTEVIVKDFN…KIEQFLIKAS (136 aa)) enclose the CID domain. The disordered stretch occupies residues 263–286 (SYTQNSNSAIPLFGNNSDTTNQQN).

As to quaternary structure, component of the CFIA complex, which is composed of RNA14, RNA15, PCF11 and CLP1. Interacts with RNA14, RNA15 and RTT103. Interacts directly with the phosphorylated CTD domain of RPB1/RNA polymerase II.

The protein localises to the nucleus. Its function is as follows. Component of the cleavage factor IA (CFIA) complex, which is involved in the endonucleolytic cleavage during polyadenylation-dependent pre-mRNA 3'-end formation and cooperates with cleavage factor NAB4/CFIB and the cleavage and polyadenylation factor (CPF) complex. Independently involved in RNA polymerase II transcript termination. Binds RNA. Seems to bridge RNA polymerase II and the native transcript and may be involved in dismantling the RNA polymerase II elongation complex. This chain is Protein PCF11 (PCF11), found in Saccharomyces cerevisiae (strain ATCC 204508 / S288c) (Baker's yeast).